The chain runs to 209 residues: NAD(P)H-quinone oxidoreductase subunit N, chloroplastic (209 aa).

The transit peptide at 1 to 45 (MGSRAICIQRVAPPCFEASQVKKIKTVGSFLVNTRSKRRRSTGVK) directs the protein to the chloroplast.

Belongs to the NDH complex subunit N family. Part of the chloroplast NDH complex, composed of a mixture of chloroplast and nucleus encoded subunits. Component of the NDH subcomplex A, at least composed of ndhH, ndhI, ndhJ, ndhK, ndhL, ndhM, ndhN and ndhO.

It is found in the plastid. Its subcellular location is the chloroplast thylakoid membrane. The catalysed reaction is a plastoquinone + NADH + (n+1) H(+)(in) = a plastoquinol + NAD(+) + n H(+)(out). It carries out the reaction a plastoquinone + NADPH + (n+1) H(+)(in) = a plastoquinol + NADP(+) + n H(+)(out). Its function is as follows. NDH shuttles electrons from NAD(P)H:plastoquinone, via FMN and iron-sulfur (Fe-S) centers, to quinones in the photosynthetic chain and possibly in a chloroplast respiratory chain. The immediate electron acceptor for the enzyme in this species is believed to be plastoquinone. Couples the redox reaction to proton translocation, and thus conserves the redox energy in a proton gradient. This is NAD(P)H-quinone oxidoreductase subunit N, chloroplastic from Arabidopsis thaliana (Mouse-ear cress).